The chain runs to 367 residues: Glutamate 5-kinase (367 aa).

Lys-9 contributes to the ATP binding site. Ser-49, Asp-136, and Asn-148 together coordinate substrate. ATP-binding positions include 168–169 (TD) and 210–216 (TGGMKSK). The 75-residue stretch at 276-350 (SGQIEIDAGA…GMQSQHIQAR (75 aa)) folds into the PUA domain.

The protein belongs to the glutamate 5-kinase family.

The protein localises to the cytoplasm. It carries out the reaction L-glutamate + ATP = L-glutamyl 5-phosphate + ADP. Its pathway is amino-acid biosynthesis; L-proline biosynthesis; L-glutamate 5-semialdehyde from L-glutamate: step 1/2. Catalyzes the transfer of a phosphate group to glutamate to form L-glutamate 5-phosphate. This is Glutamate 5-kinase from Bacillus cereus (strain ZK / E33L).